The chain runs to 232 residues: Flagellar L-ring protein (232 aa).

The signal sequence occupies residues 1-21 (MQKNAAHTYAISSLLVLSLTG). The N-palmitoyl cysteine moiety is linked to residue Cys-22. Residue Cys-22 is the site of S-diacylglycerol cysteine attachment.

The protein belongs to the FlgH family. In terms of assembly, the basal body constitutes a major portion of the flagellar organelle and consists of four rings (L,P,S, and M) mounted on a central rod.

The protein localises to the cell outer membrane. Its subcellular location is the bacterial flagellum basal body. Its function is as follows. Assembles around the rod to form the L-ring and probably protects the motor/basal body from shearing forces during rotation. In Shigella boydii serotype 4 (strain Sb227), this protein is Flagellar L-ring protein.